Consider the following 378-residue polypeptide: C-type lectin domain family 17, member A (378 aa).

The tract at residues M1–M119 is disordered. Topologically, residues M1–Y172 are cytoplasmic. 3 stretches are compositionally biased toward acidic residues: residues M17–E27, M43–E53, and M69–E79. Residues K86–P101 show a composition bias toward pro residues. The chain crosses the membrane as a helical; Signal-anchor for type II membrane protein span at residues L173 to I193. Residues K194 to C378 are Extracellular-facing. N-linked (GlcNAc...) asparagine glycans are attached at residues N215 and N237. 3 disulfide bridges follow: C254-C265, C282-C372, and C350-C364. One can recognise a C-type lectin domain in the interval F261–E373. N285 carries an N-linked (GlcNAc...) asparagine glycan. Residues E341, N343, E348, N360, and D361 each coordinate Ca(2+).

In terms of assembly, oligomer; disulfide-linked. In terms of processing, phosphorylated on tyrosine residues. Expressed on dividing B-cells of germinal centers in various tissues, including lymph nodes, tonsils, stomach, intestine, appendix and spleen.

It is found in the membrane. Cell surface receptor which may be involved in carbohydrate-mediated communication between cells in the germinal center. Binds glycans with terminal alpha-linked mannose or fucose residues. The chain is C-type lectin domain family 17, member A (CLEC17A) from Homo sapiens (Human).